The following is a 740-amino-acid chain: Catalase-peroxidase (740 aa).

The span at 1-16 (MSENHDAIVTDAKTEE) shows a compositional bias: basic and acidic residues. Residues 1–38 (MSENHDAIVTDAKTEETDGCPVAHGRAPHPTQGGGNRQ) are disordered. The tryptophyl-tyrosyl-methioninium (Trp-Tyr) (with M-257) cross-link spans 108–231 (WHSAGTYRIS…LGAVQMGLIY (124 aa)). Histidine 109 functions as the Proton acceptor in the catalytic mechanism. The segment at residues 231–257 (YVNPEGPNGNPDPIAAARDIRETFRRM) is a cross-link (tryptophyl-tyrosyl-methioninium (Tyr-Met) (with W-108)). Residue histidine 272 coordinates heme b.

It belongs to the peroxidase family. Peroxidase/catalase subfamily. As to quaternary structure, homodimer. Requires heme b as cofactor. In terms of processing, formation of the three residue Trp-Tyr-Met cross-link is important for the catalase, but not the peroxidase activity of the enzyme.

The enzyme catalyses H2O2 + AH2 = A + 2 H2O. It carries out the reaction 2 H2O2 = O2 + 2 H2O. Bifunctional enzyme with both catalase and broad-spectrum peroxidase activity. This chain is Catalase-peroxidase, found in Streptomyces coelicolor (strain ATCC BAA-471 / A3(2) / M145).